We begin with the raw amino-acid sequence, 273 residues long: Protein GMH1 (273 aa).

Residues 1 to 33 (MSYLPTYSNDLPAGPQGQRRRNNGNENDARQGY) are disordered. N-acetylserine is present on Ser-2. Residues 2–89 (SYLPTYSNDL…QTKNQWARDD (88 aa)) lie on the Cytoplasmic side of the membrane. A helical membrane pass occupies residues 90 to 110 (PSFFIFQIALISLSSIIWSIY). At 111-134 (NSGFNNDSDMGALSIIGHFFKSLV) the chain is on the lumenal side. A helical transmembrane segment spans residues 135–155 (MMVILDFFIFGFIMATIFYLL). The Cytoplasmic portion of the chain corresponds to 156–175 (LNRSHFKFKSSQNSVVEWAY). Residues 176-196 (CFDVHCNSFLIILLCLYFIQF) traverse the membrane as a helical segment. At 197–216 (LLLPIINLQNWISLLIGNSL) the chain is on the lumenal side. A helical membrane pass occupies residues 217 to 237 (YCFAIGHYFILTFYGYNQLPF). The Cytoplasmic portion of the chain corresponds to 238–242 (LKNLN). Residues 243–263 (FILLPTLGLSIIYLISLFGID) traverse the membrane as a helical segment. The Lumenal portion of the chain corresponds to 264–273 (LSKKLSFYNY).

This sequence belongs to the unc-50 family. Interacts with GEA1 and GEA2.

The protein resides in the golgi apparatus membrane. It localises to the endoplasmic reticulum membrane. This Saccharomyces cerevisiae (strain ATCC 204508 / S288c) (Baker's yeast) protein is Protein GMH1 (GMH1).